Reading from the N-terminus, the 353-residue chain is 3-ketosteroid-9-alpha-monooxygenase, ferredoxin reductase component (353 aa).

The FAD-binding FR-type domain maps to 8-117 (SHVLELQVAE…LAPSGTFVPK (110 aa)). Residues 264-353 (ATAVVTLDGT…SDSVEVTYDE (90 aa)) enclose the 2Fe-2S ferredoxin-type domain. [2Fe-2S] cluster-binding residues include Cys300, Cys305, Cys308, and Cys338.

In terms of assembly, monomer. The two-component system 3-ketosteroid-9-alpha-monooxygenase is composed of an oxygenase component KshA and a reductase component KshB. The cofactor is FAD. [2Fe-2S] cluster is required as a cofactor.

It catalyses the reaction androsta-1,4-diene-3,17-dione + 2 reduced [2Fe-2S]-[ferredoxin] + O2 + 2 H(+) = 9alpha-hydroxyandrosta-1,4-diene-3,17-dione + 2 oxidized [2Fe-2S]-[ferredoxin] + H2O. Its pathway is lipid metabolism; steroid biosynthesis. Involved in the degradation of cholesterol. Catalyzes the introduction of a 9a-hydroxyl moiety into 1,4-androstadiene-3,17-dione (ADD) to yield the 9alpha-hydroxy-1,4-androstadiene-3,17-dione (9OHADD) intermediate which spontaneously form 3-hydroxy-9,10-seconandrost-1,3,5(10)-triene-9,17-dione (HSA) via the meta-cleavage of ring B with concomitant aromatization of ring A. The chain is 3-ketosteroid-9-alpha-monooxygenase, ferredoxin reductase component (kshB) from Mycolicibacterium smegmatis (strain ATCC 700084 / mc(2)155) (Mycobacterium smegmatis).